The sequence spans 551 residues: Glucan 1,4-alpha-maltotetraohydrolase (551 aa).

The signal sequence occupies residues 1–21 (MSHILRAAVLAAVLLPFPALA). 5 residues coordinate Ca(2+): aspartate 22, glutamine 23, histidine 34, aspartate 37, and glutamate 38. Position 99-100 (99-100 (YF)) interacts with substrate. Residue asparagine 137 participates in Ca(2+) binding. Histidine 138 contributes to the substrate binding site. Cysteine 161 and cysteine 171 form a disulfide bridge. Residues aspartate 172 and aspartate 175 each coordinate Ca(2+). 177–181 (FIGGE) is a substrate binding site. Aspartate 183 is a Ca(2+) binding site. A substrate-binding site is contributed by arginine 212. Aspartate 214 (nucleophile) is an active-site residue. Glycine 218 is a Ca(2+) binding site. A disulfide bond links cysteine 237 and cysteine 272. The Proton donor role is filled by glutamate 240. 2 residues coordinate substrate: histidine 314 and glutamine 326. The CBM20 domain maps to 449 to 551 (GGEGGLVNVN…AAGASTSGSF (103 aa)).

It belongs to the glycosyl hydrolase 13 family. As to quaternary structure, monomer. Ca(2+) serves as cofactor.

The protein resides in the secreted. The enzyme catalyses Hydrolysis of (1-&gt;4)-alpha-D-glucosidic linkages in amylaceous polysaccharides, to remove successive maltotetraose residues from the non-reducing chain ends.. It participates in glycan degradation; starch degradation. This chain is Glucan 1,4-alpha-maltotetraohydrolase (mta), found in Roseateles saccharophilus (Pseudomonas saccharophila).